A 483-amino-acid polypeptide reads, in one-letter code: MEHYSLAQLSKALHNREFSSVELTQHCINKIQSNKDLNAFISLDEDQALKEAQSADLVLKNGEGKPLTGIPMALKDLFCTKRLNTTCASKMLANFQAPYDATIVTKFKQNGAIIIGKTNMDEFAMGSSNENSYFGSVKNPWDRERVPGGSSGGSAAAVAGNLVPFAIGSDTGGSIRQPAAFCGISGIKPTYGLVSRYGMVAFASSLDQAGPFAKSAEDLAMILHCIAGFDSKDSTSVDRVIPDYSAEIKKPVDKIRIGLPSCFFQPQVEKGIQDAIHNAVKLFENLGAEIIEIDLKLQPFWVPCYYVIACAEASSNLSRYDGIRFGHRSKSASTLIELITNSRSEGFGNEVKRRILTGTHVLSSGFFDAYYLHAQKVRRLIRDELITTLNSVDVILGPTTPTTAFKLGEKINDPIQNYLADVFTVAANLAGLPAISIPTGFENKLPIGLQLMGKHFSESRLLAIAHHYQQHTNWHLANPNKQG.

Catalysis depends on charge relay system residues lysine 75 and serine 150. The active-site Acyl-ester intermediate is the serine 174.

The protein belongs to the amidase family. GatA subfamily. In terms of assembly, heterotrimer of A, B and C subunits.

The enzyme catalyses L-glutamyl-tRNA(Gln) + L-glutamine + ATP + H2O = L-glutaminyl-tRNA(Gln) + L-glutamate + ADP + phosphate + H(+). Functionally, allows the formation of correctly charged Gln-tRNA(Gln) through the transamidation of misacylated Glu-tRNA(Gln) in organisms which lack glutaminyl-tRNA synthetase. The reaction takes place in the presence of glutamine and ATP through an activated gamma-phospho-Glu-tRNA(Gln). The sequence is that of Glutamyl-tRNA(Gln) amidotransferase subunit A from Legionella pneumophila (strain Paris).